A 421-amino-acid polypeptide reads, in one-letter code: O-glycoside alpha-1,2-mannosyltransferase homolog 5 (421 aa).

Glutamate 318 acts as the Nucleophile in catalysis.

Belongs to the glycosyltransferase 15 family.

The protein resides in the cytoplasm. In terms of biological role, probable mannosyltransferase involved in O-glycosylation of cell wall and secreted proteins. This Schizosaccharomyces pombe (strain 972 / ATCC 24843) (Fission yeast) protein is O-glycoside alpha-1,2-mannosyltransferase homolog 5 (omh5).